We begin with the raw amino-acid sequence, 1044 residues long: Pre-mRNA-splicing factor ATP-dependent RNA helicase DHX16 (1044 aa).

Disordered stretches follow at residues 101–210 (EDSE…AYEE) and 374–394 (LQGN…QKES). 3 positions are modified to phosphoserine: serine 103, serine 106, and serine 107. Over residues 119–130 (QKKRKKRKHLRK) the composition is skewed to basic residues. Positions 134–143 (EEEEEEEEEA) are enriched in acidic residues. Serine 163 carries the phosphoserine modification. A compositionally biased stretch (basic and acidic residues) spans 169–210 (RTERERLQDLEERDAFAERVRQRDKDRTRNVLERSDKKAYEE). The Helicase ATP-binding domain occupies 412 to 576 (LAAIANHQVL…FDDAPVFRIP (165 aa)). 425-432 (GETGSGKT) is an ATP binding site. The DEAH box signature appears at 523–526 (DEAH). Residues 601–774 (SVLQIHVTQP…NVVLLLKSLG (174 aa)) enclose the Helicase C-terminal domain. Position 715 is a phosphothreonine (threonine 715).

Belongs to the DEAD box helicase family. DEAH subfamily. DDX16/PRP8 sub-subfamily. As to quaternary structure, component of pre-catalytic spliceosome complexes. Component of the minor spliceosome, which splices U12-type introns. Interacts with GPKOW. Interacts with TRIM6. Interacts with RIGI.

It is found in the nucleus. Its subcellular location is the nucleoplasm. The protein resides in the cytoplasm. The catalysed reaction is ATP + H2O = ADP + phosphate + H(+). Its function is as follows. Required for pre-mRNA splicing as a component of the spliceosome. Contributes to pre-mRNA splicing after spliceosome formation and prior to the first transesterification reaction. As a component of the minor spliceosome, involved in the splicing of U12-type introns in pre-mRNAs. Also plays a role in innate antiviral response by acting as a pattern recognition receptor sensing splicing signals in viral RNA. Mechanistically, TRIM6 promotes the interaction between unanchored 'Lys-48'-polyubiquitin chains and DHX16, leading to DHX16 interaction with RIGI and ssRNA to amplify RIGI-dependent innate antiviral immune responses. This is Pre-mRNA-splicing factor ATP-dependent RNA helicase DHX16 (DHX16) from Pan troglodytes (Chimpanzee).